The primary structure comprises 465 residues: Asparagine--tRNA ligase (465 aa).

This sequence belongs to the class-II aminoacyl-tRNA synthetase family. In terms of assembly, homodimer.

The protein resides in the cytoplasm. The catalysed reaction is tRNA(Asn) + L-asparagine + ATP = L-asparaginyl-tRNA(Asn) + AMP + diphosphate + H(+). The protein is Asparagine--tRNA ligase of Clostridium perfringens (strain ATCC 13124 / DSM 756 / JCM 1290 / NCIMB 6125 / NCTC 8237 / Type A).